We begin with the raw amino-acid sequence, 387 residues long: Chorismate synthase (387 aa).

2 residues coordinate NADP(+): Arg40 and Arg46. FMN is bound by residues 129–131 (RSS), 250–251 (QA), Gly295, 310–314 (KPIPT), and Arg336.

The protein belongs to the chorismate synthase family. In terms of assembly, homotetramer. It depends on FMNH2 as a cofactor.

It carries out the reaction 5-O-(1-carboxyvinyl)-3-phosphoshikimate = chorismate + phosphate. The protein operates within metabolic intermediate biosynthesis; chorismate biosynthesis; chorismate from D-erythrose 4-phosphate and phosphoenolpyruvate: step 7/7. In terms of biological role, catalyzes the anti-1,4-elimination of the C-3 phosphate and the C-6 proR hydrogen from 5-enolpyruvylshikimate-3-phosphate (EPSP) to yield chorismate, which is the branch point compound that serves as the starting substrate for the three terminal pathways of aromatic amino acid biosynthesis. This reaction introduces a second double bond into the aromatic ring system. The polypeptide is Chorismate synthase (Desulforamulus reducens (strain ATCC BAA-1160 / DSM 100696 / MI-1) (Desulfotomaculum reducens)).